The primary structure comprises 262 residues: Tritrans,polycis-undecaprenyl-diphosphate synthase (geranylgeranyl-diphosphate specific) (262 aa).

Asp40 is an active-site residue. Asp40 is a Mg(2+) binding site. Residues 41–44 (GNRR), Trp45, and 85–87 (STE) contribute to the substrate site. The active-site Proton acceptor is the Asn88. Substrate-binding positions include Arg92, Arg211, and 217 to 219 (RIS). Glu230 provides a ligand contact to Mg(2+).

Belongs to the UPP synthase family. As to quaternary structure, homodimer. The cofactor is Mg(2+).

It carries out the reaction geranylgeranyl diphosphate + 7 isopentenyl diphosphate = tri-trans,hepta-cis-undecaprenyl diphosphate + 7 diphosphate. Catalyzes the sequential condensation of isopentenyl diphosphate (IPP) with geranylgeranyl diphosphate (GGPP) to yield (2Z,6Z,10Z,14Z,18Z,22Z,26Z,30E,34E,38E)-undecaprenyl diphosphate (tritrans,heptacis-UPP). It is probably the precursor of glycosyl carrier lipids. The polypeptide is Tritrans,polycis-undecaprenyl-diphosphate synthase (geranylgeranyl-diphosphate specific) (Sulfurisphaera tokodaii (strain DSM 16993 / JCM 10545 / NBRC 100140 / 7) (Sulfolobus tokodaii)).